Consider the following 84-residue polypeptide: Small ribosomal subunit protein uS17 (84 aa).

It belongs to the universal ribosomal protein uS17 family. Part of the 30S ribosomal subunit.

In terms of biological role, one of the primary rRNA binding proteins, it binds specifically to the 5'-end of 16S ribosomal RNA. This Alkaliphilus oremlandii (strain OhILAs) (Clostridium oremlandii (strain OhILAs)) protein is Small ribosomal subunit protein uS17.